We begin with the raw amino-acid sequence, 999 residues long: Signal peptide, CUB and EGF-like domain-containing protein 2 (999 aa).

Residues 1 to 31 (MGVAGRNRPGAAWAVLLLLLLLPPLLLLAGA) form the signal peptide. An EGF-like 1; calcium-binding domain is found at 45-85 (DVDECAQGLDDCHADALCQNTPTSYKCSCKPGYQGEGRQCE). Cystine bridges form between Cys49/Cys62, Cys56/Cys71, Cys73/Cys84, Cys90/Cys102, Cys98/Cys111, and Cys113/Cys126. Positions 86–127 (DIDECGNELNGGCVHDCLNIPGNYRCTCFDGFMLAHDGHNCL) constitute an EGF-like 2; calcium-binding domain. Positions 128 to 168 (DVDECLENNGGCQHTCVNVMGSYECCCKEGFFLSDNQHTCI) constitute an EGF-like 3; calcium-binding domain. EGF-like domains are found at residues 177–213 (CMNK…QRDC), 217–252 (CNHG…GRSC), and 286–321 (CAVN…GKTC). One can recognise an EGF-like 7; calcium-binding domain in the interval 323–363 (DIDECQTRNGGCDHFCKNIVGSFDCGCKKGFKLLTDEKSCQ). Residues 364–402 (DVDECSLDRTCDHSCINHPGTFACACNRGYTLYGFTHCG) enclose the EGF-like 8; calcium-binding domain. Cystine bridges form between Cys368–Cys378, Cys374–Cys387, Cys389–Cys401, Cys407–Cys418, Cys414–Cys427, and Cys429–Cys442. The 41-residue stretch at 403-443 (DTNECSINNGGCQQVCVNTVGSYECQCHPGYKLHWNKKDCV) folds into the EGF-like 9; calcium-binding domain. Residue Asn659 is glycosylated (N-linked (GlcNAc...) asparagine). A disulfide bond links Cys809 and Cys835. The CUB domain maps to 809–921 (CGGELGDFTG…RGFQVPYVTY (113 aa)). Residues 847-856 (ILIVVPEIFL) form an interaction with the cholesterol-anchor of SHH region. Cys862 and Cys883 are disulfide-bonded.

As to quaternary structure, forms homooligomers. Forms heterooligomers with SCUBE1. Forms heterooligomers with SCUBE3. Interacts with SHH via the cholesterol anchor of the dually lipid-modified SHH (ShhNp). Interacts with PTCH1. Interacts with VEGFR2. Post-translationally, N-glycosylated. In terms of tissue distribution, expressed in a broad spectrum of adult tissues.

The protein resides in the secreted. The protein localises to the cell surface. Its function is as follows. Lipid-binding protein required for SHH long-range signaling by binding to the dually lipid-modified SHH (ShhNp) and by promoting ShhNp mobilization, solubilization and release from the cell membrane. Acts by enhancing the proteolytic processing (shedding) of the lipid-modified N- and C- terminal of ShhNp at the cell surface. Synergizes with DISP1 to increase SHH secretion. Probable cell surface coreceptor for VEGFR2 involved in VEGFR2-mediated angiogenesis. The polypeptide is Signal peptide, CUB and EGF-like domain-containing protein 2 (Homo sapiens (Human)).